Here is a 183-residue protein sequence, read N- to C-terminus: Threonylcarbamoyl-AMP synthase (183 aa).

The YrdC-like domain maps to 1 to 183 (MNFTEIAEKL…LLTDQLIREG (183 aa)).

The protein belongs to the SUA5 family. TsaC subfamily.

It is found in the cytoplasm. The catalysed reaction is L-threonine + hydrogencarbonate + ATP = L-threonylcarbamoyladenylate + diphosphate + H2O. In terms of biological role, required for the formation of a threonylcarbamoyl group on adenosine at position 37 (t(6)A37) in tRNAs that read codons beginning with adenine. Catalyzes the conversion of L-threonine, HCO(3)(-)/CO(2) and ATP to give threonylcarbamoyl-AMP (TC-AMP) as the acyladenylate intermediate, with the release of diphosphate. The chain is Threonylcarbamoyl-AMP synthase from Actinobacillus succinogenes (strain ATCC 55618 / DSM 22257 / CCUG 43843 / 130Z).